Here is a 247-residue protein sequence, read N- to C-terminus: Terpene cyclase ausL (247 aa).

The next 6 helical transmembrane spans lie at 49 to 69, 75 to 95, 114 to 134, 138 to 158, 171 to 191, and 206 to 226; these read AIAVLPLCCDIAWEFTYAWIY, HWQGVVRVWFFLHTAVLAATL, LVLLYVAVIGAFAAGQLCLAL, GALGFHWGGALCQFLSSSGAV, SLVIWGARAISTAGGFVKLCI, and PMCWFYIGIVLSLDASYPVLY.

The protein belongs to the paxB family.

The protein resides in the membrane. It functions in the pathway secondary metabolite biosynthesis; terpenoid biosynthesis. Its function is as follows. Terpene cyclase; part of the gene cluster that mediates the biosynthesis of calidodehydroaustin, a fungal meroterpenoid. The first step of the pathway is the synthesis of 3,5-dimethylorsellinic acid by the polyketide synthase ausA. 3,5-dimethylorsellinic acid is then prenylated by the polyprenyl transferase ausN. Further epoxidation by the FAD-dependent monooxygenase ausM and cyclization by the probable terpene cyclase ausL lead to the formation of protoaustinoid A. Protoaustinoid A is then oxidized to spiro-lactone preaustinoid A3 by the combined action of the FAD-binding monooxygenases ausB and ausC, and the dioxygenase ausE. Acid-catalyzed keto-rearrangement and ring contraction of the tetraketide portion of preaustinoid A3 by ausJ lead to the formation of preaustinoid A4. The aldo-keto reductase ausK, with the help of ausH, is involved in the next step by transforming preaustinoid A4 into isoaustinone which is in turn hydroxylated by the P450 monooxygenase ausI to form austinolide. The cytochrome P450 monooxygenase ausG modifies austinolide to austinol. Austinol is further acetylated to austin by the O-acetyltransferase ausP, which spontaneously changes to dehydroaustin. The cytochrome P450 monooxygenase ausR then converts dehydroaustin is into 7-dehydrodehydroaustin. The hydroxylation catalyzed by ausR permits the O-acetyltransferase ausQ to add an additional acetyl group to the molecule, leading to the formation of acetoxydehydroaustin. The short chain dehydrogenase ausT catalyzes the reduction of the double bond present between carbon atoms 1 and 2 to convert 7-dehydrodehydroaustin into 1,2-dihydro-7-hydroxydehydroaustin. AusQ catalyzes not only an acetylation reaction but also the addition of the PKS ausV diketide product to 1,2-dihydro-7-hydroxydehydroaustin, forming precalidodehydroaustin. Finally, the iron/alpha-ketoglutarate-dependent dioxygenase converts precalidodehydroaustin into calidodehydroaustin. In Aspergillus calidoustus, this protein is Terpene cyclase ausL.